Here is a 504-residue protein sequence, read N- to C-terminus: Maturase K (504 aa).

Belongs to the intron maturase 2 family. MatK subfamily.

It is found in the plastid. Its subcellular location is the chloroplast. In terms of biological role, usually encoded in the trnK tRNA gene intron. Probably assists in splicing its own and other chloroplast group II introns. The sequence is that of Maturase K from Lepidium virginicum (Virginia pepperweed).